The following is a 282-amino-acid chain: Transcription factor LBX1 (282 aa).

Basic and acidic residues predominate over residues 1–20 (MTSKEDGKAAPGEERRRSPL). Residues 1–36 (MTSKEDGKAAPGEERRRSPLDHLPPPANSNKPLTPF) are disordered. Residues 125-184 (RRKSRTAFTNHQIYELEKRFLYQKYLSPADRDQIAQQLGLTNAQVITWFQNRRAKLKRDL) constitute a DNA-binding region (homeobox). Positions 210-282 (ELEQNSEASG…EEDEEIDVDD (73 aa)) are disordered. The segment covering 218 to 227 (SGGGGGGGCG) has biased composition (gly residues). A compositionally biased stretch (acidic residues) spans 269-282 (CSEDEEDEEIDVDD).

Interacts with SKOR1 which acts as a transcriptional corepressor. As to expression, expressed in the dorsal part of the spinal cord and hindbrain and in presumptive myogenic cells in lateral regions of differentiating somites.

The protein localises to the nucleus. In terms of biological role, transcription factor required for the development of GABAergic interneurons in the dorsal horn of the spinal cord and migration and further development of hypaxial muscle precursor cells for limb muscles, diaphragm and hypoglossal cord. This Mus musculus (Mouse) protein is Transcription factor LBX1 (Lbx1).